Reading from the N-terminus, the 244-residue chain is Tyrosine recombinase XerD-like (244 aa).

The region spanning 1–73 is the Core-binding (CB) domain; that stretch reads MRDRISAFLE…ACNQFLYFLY (73 aa). The region spanning 90–244 is the Tyr recombinase domain; that stretch reads AEKKTEKPEI…KTVLTLEKYR (155 aa). Residues Lys-150 and Arg-211 contribute to the active site. The active-site O-(3'-phospho-DNA)-tyrosine intermediate is Tyr-243.

The protein belongs to the 'phage' integrase family. XerD-like subfamily.

It localises to the cytoplasm. Functionally, putative tyrosine recombinase. Not involved in the cutting and rejoining of the recombining DNA molecules on dif(SL) site. In Streptococcus pneumoniae (strain Hungary19A-6), this protein is Tyrosine recombinase XerD-like.